We begin with the raw amino-acid sequence, 293 residues long: NAD-dependent protein deacetylase (293 aa).

Residues 5–282 enclose the Deacetylase sirtuin-type domain; that stretch reads PAHDHHTLQD…LHAPPHLPRA (278 aa). NAD(+) contacts are provided by residues 27-47 and 105-108; these read GAGCSTDSGIPDYRDLQGGWK and QNVD. The active-site Proton acceptor is the His-123. Residues Cys-131, Cys-134, Cys-182, and Cys-185 each contribute to the Zn(2+) site. NAD(+)-binding positions include 222-224, 248-250, and Cys-266; these read GSS and NFG.

The protein belongs to the sirtuin family. Class II subfamily. Zn(2+) serves as cofactor.

The protein localises to the cytoplasm. The catalysed reaction is N(6)-acetyl-L-lysyl-[protein] + NAD(+) + H2O = 2''-O-acetyl-ADP-D-ribose + nicotinamide + L-lysyl-[protein]. In terms of biological role, NAD-dependent protein deacetylase which modulates the activities of several enzymes which are inactive in their acetylated form. The protein is NAD-dependent protein deacetylase of Xanthomonas axonopodis pv. citri (strain 306).